Reading from the N-terminus, the 837-residue chain is Toll-like receptor 4 (837 aa).

Residues methionine 1–proline 23 form the signal peptide. Topologically, residues glutamate 24 to lysine 629 are extracellular. An intrachain disulfide couples cysteine 29 to cysteine 38. Asparagine 33 is a glycosylation site (N-linked (GlcNAc...) asparagine). 5 LRR repeats span residues serine 53–serine 74, glutamate 77–serine 98, histidine 101–glycine 122, serine 125–histidine 146, and threonine 149–serine 170. Residue asparagine 171 is glycosylated (N-linked (GlcNAc...) asparagine). LRR repeat units follow at residues asparagine 174–histidine 197, asparagine 203–glutamate 223, and arginine 225–isoleucine 245. The N-linked (GlcNAc...) asparagine glycan is linked to asparagine 203. Cysteine 279 and cysteine 304 are disulfide-bonded. Residues asparagine 280 and asparagine 307 are each glycosylated (N-linked (GlcNAc...) asparagine). LRR repeat units lie at residues glycine 329–lysine 349, serine 350–proline 371, serine 372–serine 392, serine 398–glutamate 420, glutamine 421–leucine 442, asparagine 446–histidine 454, serine 470–leucine 493, asparagine 495–serine 516, serine 519–cysteine 540, and serine 543–glutamine 563. An intrachain disulfide couples cysteine 388 to cysteine 389. Asparagine 495 and asparagine 524 each carry an N-linked (GlcNAc...) asparagine glycan. Asparagine 573 carries an N-linked (GlcNAc...) asparagine glycan. An LRRCT domain is found at asparagine 577–methionine 627. 2 disulfide bridges follow: cysteine 581–cysteine 607 and cysteine 583–cysteine 625. Residues asparagine 622 and asparagine 628 are each glycosylated (N-linked (GlcNAc...) asparagine). Residues threonine 630–tyrosine 650 form a helical membrane-spanning segment. Residues lysine 651–isoleucine 837 are Cytoplasmic-facing. A TIR domain is found at asparagine 670 to leucine 813.

This sequence belongs to the Toll-like receptor family. In terms of assembly, belongs to the lipopolysaccharide (LPS) receptor, a multi-protein complex containing at least CD14, LY96 and TLR4. Binding to bacterial LPS leads to homodimerization. Interacts with LY96 via the extracellular domain. Interacts with MYD88 and TIRAP via their respective TIR domains. Interacts with TICAM2. Interacts with NOX4. Interacts with CNPY3 and HSP90B1; this interaction is required for proper folding in the endoplasmic reticulum. Interacts with MAP3K21; this interaction leads to negative regulation of TLR4 signaling. Interacts with CD36, following CD36 stimulation by oxLDL or amyloid-beta 42, and forms a heterodimer with TLR6. The trimeric complex is internalized and triggers inflammatory response. LYN kinase activity facilitates TLR4-TLR6 heterodimerization and signal initiation. Interacts with TICAM1 in response to LPS in a WDFY1-dependent manner. Interacts with WDFY1 in response to LPS. Interacts with SMPDL3B. Interacts with CEACAM1; upon lipopolysaccharide stimulation, forms a complex including TLR4 and the phosphorylated form of SYK and CEACAM1, which in turn, recruits PTPN6 that dephosphorylates SYK, reducing the production of reactive oxygen species (ROS) and lysosome disruption, which in turn, reduces the activity of the inflammasome. Interacts with RFTN1; the interaction occurs in response to lipopolysaccharide stimulation. Interacts with SCIMP; the interaction occurs in response to lipopolysaccharide stimulation and is enhanced by phosphorylation of SCIMP by LYN. This interaction facilitates the phosphorylation of TLR4 by LYN which elicits a selective cytokine response in macrophages. Interacts with TRAF3IP3. Interacts with TREM1; this interaction enhances TLR4-mediated inflammatory response. Interacts with ZG16B/PAUF. Interacts with CD82; this interaction inhibits TLR4-mediated signaling pathway. In terms of processing, phosphorylated on tyrosine residues by LYN after binding lipopolysaccharide. Post-translationally, ubiquitinated by RNF128 via 'Lys-28'-linked polyubiquitin chains, leading to proteasomal degradation.

It localises to the cell membrane. The protein resides in the early endosome. Its subcellular location is the cell projection. It is found in the ruffle. In terms of biological role, transmembrane receptor that functions as a pattern recognition receptor recognizing pathogen- and damage-associated molecular patterns (PAMPs and DAMPs) to induce innate immune responses via downstream signaling pathways. At the plasma membrane, cooperates with LY96 to mediate the innate immune response to bacterial lipopolysaccharide (LPS). Also involved in LPS-independent inflammatory responses triggered by free fatty acids, such as palmitate, and Ni(2+). Mechanistically, acts via MYD88, TIRAP and TRAF6, leading to NF-kappa-B activation, cytokine secretion and the inflammatory response. Alternatively, CD14-mediated TLR4 internalization via endocytosis is associated with the initiation of a MYD88-independent signaling via the TICAM1-TBK1-IRF3 axis leading to type I interferon production. In addition to the secretion of proinflammatory cytokines, initiates the activation of NLRP3 inflammasome and formation of a positive feedback loop between autophagy and NF-kappa-B signaling cascade. In complex with TLR6, promotes inflammation in monocytes/macrophages by associating with TLR6 and the receptor CD86. Upon ligand binding, such as oxLDL or amyloid-beta 42, the TLR4:TLR6 complex is internalized and triggers inflammatory response, leading to NF-kappa-B-dependent production of CXCL1, CXCL2 and CCL9 cytokines, via MYD88 signaling pathway, and CCL5 cytokine, via TICAM1 signaling pathway. In myeloid dendritic cells, vesicular stomatitis virus glycoprotein G but not LPS promotes the activation of IRF7, leading to type I IFN production in a CD14-dependent manner. This chain is Toll-like receptor 4 (TLR4), found in Gorilla gorilla gorilla (Western lowland gorilla).